Reading from the N-terminus, the 40-residue chain is uncharacterized protein (40 aa).

This is an uncharacterized protein from Treponema pallidum (strain Nichols).